The chain runs to 377 residues: Putative zinc metalloprotease Atu1380 (377 aa).

A Zn(2+)-binding site is contributed by histidine 29. Glutamate 30 is an active-site residue. Zn(2+) is bound at residue histidine 33. Helical transmembrane passes span 118–140 (VAAGPIANFILAILIFAVLFGIY), 299–321 (LGISAVIQLAAVLSVSIGLLNLM), and 351–373 (VAFRIGMMMILGLMVFATWNDIS). Residues 129–202 (AILIFAVLFG…TPITVTVERA (74 aa)) enclose the PDZ domain.

This sequence belongs to the peptidase M50B family. The cofactor is Zn(2+).

The protein localises to the cell inner membrane. This chain is Putative zinc metalloprotease Atu1380, found in Agrobacterium fabrum (strain C58 / ATCC 33970) (Agrobacterium tumefaciens (strain C58)).